The following is a 158-amino-acid chain: D-aminoacyl-tRNA deacylase (158 aa).

The short motif at 138-139 is the Gly-cisPro motif, important for rejection of L-amino acids element; the sequence is GP.

Belongs to the DTD family. Homodimer.

It is found in the cytoplasm. It carries out the reaction glycyl-tRNA(Ala) + H2O = tRNA(Ala) + glycine + H(+). The enzyme catalyses a D-aminoacyl-tRNA + H2O = a tRNA + a D-alpha-amino acid + H(+). Functionally, an aminoacyl-tRNA editing enzyme that deacylates mischarged D-aminoacyl-tRNAs. Hydrolyzes correctly charged, achiral, glycyl-tRNA(Gly). Deacylates mischarged endogenous and E.coli glycyl-tRNA(Ala), protecting cells against glycine mischarging by AlaRS. Acts via tRNA-based rather than protein-based catalysis; rejects L-amino acids rather than detecting D-amino acids in the active site. By recycling D-aminoacyl-tRNA to D-amino acids and free tRNA molecules, this enzyme counteracts the toxicity associated with the formation of D-aminoacyl-tRNA entities in vivo and helps enforce protein L-homochirality. The polypeptide is D-aminoacyl-tRNA deacylase (Drosophila melanogaster (Fruit fly)).